The primary structure comprises 819 residues: Zinc finger protein with KRAB and SCAN domains 5 (819 aa).

An SCAN box domain is found at 51-132 (QRFKHFQYHE…AVIESIQREL (82 aa)). Glycyl lysine isopeptide (Lys-Gly) (interchain with G-Cter in SUMO2) cross-links involve residues lysine 214, lysine 246, and lysine 302. Residues 216 to 287 (EDVADVAVSF…HWVAAERTEK (72 aa)) enclose the KRAB domain. 2 disordered regions span residues 236–263 (SQKS…KEGN) and 283–340 (ERTE…GERG). Over residues 240–249 (LGRDSRKEDC) the composition is skewed to basic and acidic residues. The span at 329–340 (VNRKQKSNGERG) shows a compositional bias: basic and acidic residues. 9 C2H2-type zinc fingers span residues 341-363 (HRCG…RRIH), 369-391 (FKCG…QRVH), 397-419 (YKCQ…HSVH), 425-447 (YGCN…LKRH), 540-562 (HQCN…RRIH), 568-590 (FRCE…HRVH), 596-618 (YACH…QSVH), 624-646 (FKCN…LRLH), and 652-674 (HQCH…QVLH). A Glycyl lysine isopeptide (Lys-Gly) (interchain with G-Cter in SUMO2) cross-link involves residue lysine 700. C2H2-type zinc fingers lie at residues 708–730 (YQCD…YRTH), 764–786 (HQCN…QRIH), and 792–814 (LQCK…LRSH). Lysine 776 participates in a covalent cross-link: Glycyl lysine isopeptide (Lys-Gly) (interchain with G-Cter in SUMO2).

This sequence belongs to the krueppel C2H2-type zinc-finger protein family. As to expression, testis specific.

The protein localises to the nucleus. In terms of biological role, may be involved in transcriptional regulation. The chain is Zinc finger protein with KRAB and SCAN domains 5 (Zkscan5) from Mus musculus (Mouse).